The sequence spans 153 residues: Interleukin-4 (153 aa).

An N-terminal signal peptide occupies residues 1–24 (MGLTSQLLPPLFFLLACAGNFAHG). 3 cysteine pairs are disulfide-bonded: Cys-27–Cys-151, Cys-48–Cys-89, and Cys-70–Cys-123. Asn-62 carries N-linked (GlcNAc...) asparagine glycosylation.

Belongs to the IL-4/IL-13 family.

It localises to the secreted. Functionally, participates in at least several B-cell activation processes as well as of other cell types. It is a costimulator of DNA-synthesis. It induces the expression of class II MHC molecules on resting B-cells. It enhances both secretion and cell surface expression of IgE and IgG1. It also regulates the expression of the low affinity Fc receptor for IgE (CD23) on both lymphocytes and monocytes. Positively regulates IL31RA expression in macrophages. Stimulates autophagy in dendritic cells by interfering with mTORC1 signaling and through the induction of RUFY4. This is Interleukin-4 (IL4) from Cercocebus atys (Sooty mangabey).